The following is a 520-amino-acid chain: N-acetylgalactosamine-6-sulfatase (520 aa).

The N-terminal stretch at 1–23 (MAACTAAQQLLLVLSALGLLAAG) is a signal peptide. Residues 24-377 (APQPPNIVLL…PTMLKGQMMD (354 aa)) form a catalytic domain region. Positions 36, 37, and 76 each coordinate Ca(2+). The active-site Nucleophile is the C76. At C76 the chain carries 3-oxoalanine (Cys). H139 is an active-site residue. N201 is a glycosylation site (N-linked (GlcNAc...) asparagine). D286 and N287 together coordinate Ca(2+). C306 and C417 are disulfide-bonded. Residue N421 is glycosylated (N-linked (GlcNAc...) asparagine). 2 disulfides stabilise this stretch: C487/C516 and C499/C505.

The protein belongs to the sulfatase family. In terms of assembly, homodimer. Ca(2+) serves as cofactor. Post-translationally, the conversion to 3-oxoalanine (also known as C-formylglycine, FGly), of a serine or cysteine residue in prokaryotes and of a cysteine residue in eukaryotes, is critical for catalytic activity. In terms of tissue distribution, widely expressed. Higher expression in liver and kidney.

The protein localises to the lysosome. It catalyses the reaction Hydrolysis of the 6-sulfate groups of the N-acetyl-D-galactosamine 6-sulfate units of chondroitin sulfate and of the D-galactose 6-sulfate units of keratan sulfate.. This Mus musculus (Mouse) protein is N-acetylgalactosamine-6-sulfatase (Galns).